A 267-amino-acid polypeptide reads, in one-letter code: MKVALVYNEKVETLAVVKALEKLLDSRKIEIDPENPDVVITIGGDGTLISGFHKYQNLVDQIRFIGVHTGHLGFYTDWRNFEIGKMVDNLTKKQPSSASYPLLELIITTGSGEKKKLLALNEATIKRVSKTLKADVYIRDQFFESFKGDGLCVSTPTGSTAYSKSLGGAVIHPRLKALQMTEIASINNRVFRTLSSPIVIAPDEWITIKPESDDHYVVTYDGYEFNHKHIKKIEYRISQHVIRFDKYQHTHFWNRVEDAFIGQPKNK.

D45 serves as the catalytic Proton acceptor. NAD(+) contacts are provided by residues 45–46, 121–122, K147, D149, 160–165, and A184; these read DG, NE, and TAYSKS.

It belongs to the NAD kinase family. A divalent metal cation is required as a cofactor.

It localises to the cytoplasm. It carries out the reaction NAD(+) + ATP = ADP + NADP(+) + H(+). In terms of biological role, involved in the regulation of the intracellular balance of NAD and NADP, and is a key enzyme in the biosynthesis of NADP. Catalyzes specifically the phosphorylation on 2'-hydroxyl of the adenosine moiety of NAD to yield NADP. In Lactobacillus gasseri (strain ATCC 33323 / DSM 20243 / BCRC 14619 / CIP 102991 / JCM 1131 / KCTC 3163 / NCIMB 11718 / NCTC 13722 / AM63), this protein is NAD kinase.